The primary structure comprises 84 residues: Small ribosomal subunit protein bS20 (84 aa).

Residues 62-72 show a composition bias toward basic residues; that stretch reads KNKARRLKSRA. The segment at 62–84 is disordered; it reads KNKARRLKSRAARWSNSATAASR. Residues 75-84 are compositionally biased toward polar residues; it reads WSNSATAASR.

It belongs to the bacterial ribosomal protein bS20 family.

Binds directly to 16S ribosomal RNA. The polypeptide is Small ribosomal subunit protein bS20 (Mycoplasmoides gallisepticum (strain R(low / passage 15 / clone 2)) (Mycoplasma gallisepticum)).